Reading from the N-terminus, the 197-residue chain is Holliday junction resolvase RecU (197 aa).

Thr-82, Asp-84, Glu-97, and Gln-116 together coordinate Mg(2+).

This sequence belongs to the RecU family. Mg(2+) serves as cofactor.

It localises to the cytoplasm. The enzyme catalyses Endonucleolytic cleavage at a junction such as a reciprocal single-stranded crossover between two homologous DNA duplexes (Holliday junction).. Endonuclease that resolves Holliday junction intermediates in genetic recombination. Cleaves mobile four-strand junctions by introducing symmetrical nicks in paired strands. Promotes annealing of linear ssDNA with homologous dsDNA. Required for DNA repair, homologous recombination and chromosome segregation. The polypeptide is Holliday junction resolvase RecU (Streptococcus mutans serotype c (strain ATCC 700610 / UA159)).